A 262-amino-acid chain; its full sequence is Hydroxyethylthiazole kinase (262 aa).

Met-44 is a substrate binding site. Residues Arg-118 and Thr-166 each coordinate ATP. Gly-193 provides a ligand contact to substrate.

It belongs to the Thz kinase family. Requires Mg(2+) as cofactor.

The enzyme catalyses 5-(2-hydroxyethyl)-4-methylthiazole + ATP = 4-methyl-5-(2-phosphooxyethyl)-thiazole + ADP + H(+). It participates in cofactor biosynthesis; thiamine diphosphate biosynthesis; 4-methyl-5-(2-phosphoethyl)-thiazole from 5-(2-hydroxyethyl)-4-methylthiazole: step 1/1. In terms of biological role, catalyzes the phosphorylation of the hydroxyl group of 4-methyl-5-beta-hydroxyethylthiazole (THZ). The sequence is that of Hydroxyethylthiazole kinase from Chlamydia caviae (strain ATCC VR-813 / DSM 19441 / 03DC25 / GPIC) (Chlamydophila caviae).